The sequence spans 198 residues: Elongation factor Ts (198 aa).

An involved in Mg(2+) ion dislocation from EF-Tu region spans residues 81 to 84 (TDFV).

This sequence belongs to the EF-Ts family.

Its subcellular location is the cytoplasm. In terms of biological role, associates with the EF-Tu.GDP complex and induces the exchange of GDP to GTP. It remains bound to the aminoacyl-tRNA.EF-Tu.GTP complex up to the GTP hydrolysis stage on the ribosome. The chain is Elongation factor Ts from Pseudothermotoga lettingae (strain ATCC BAA-301 / DSM 14385 / NBRC 107922 / TMO) (Thermotoga lettingae).